The following is a 390-amino-acid chain: Protein phosphatase methylesterase 1 (390 aa).

A disordered region spans residues 19–50 (FGLSSLSEDPDESESNSNYFSPTPQPPNELRT). The AB hydrolase-1 domain maps to 100-332 (PIFICHHGAG…NLIIGQMQGK (233 aa)). Catalysis depends on residues Ser186, Asp213, and His346.

It belongs to the AB hydrolase superfamily.

It catalyses the reaction [phosphatase 2A protein]-C-terminal L-leucine methyl ester + H2O = [phosphatase 2A protein]-C-terminal L-leucine + methanol + H(+). Its function is as follows. Demethylates proteins that have been reversibly carboxymethylated. Demethylates the phosphatase PP2A catalytic subunit. This is Protein phosphatase methylesterase 1 (PPE1) from Debaryomyces hansenii (strain ATCC 36239 / CBS 767 / BCRC 21394 / JCM 1990 / NBRC 0083 / IGC 2968) (Yeast).